We begin with the raw amino-acid sequence, 358 residues long: Phospho-N-acetylmuramoyl-pentapeptide-transferase (358 aa).

A run of 10 helical transmembrane segments spans residues Phe-24–Val-44, Thr-73–Leu-93, Asn-95–Asp-115, Met-134–Phe-154, Glu-169–Val-189, Gly-197–Ala-217, Gly-233–Trp-253, Val-261–Leu-281, Ile-286–Val-306, and Lys-335–Leu-355.

This sequence belongs to the glycosyltransferase 4 family. MraY subfamily. Mg(2+) serves as cofactor.

The protein localises to the cell inner membrane. It catalyses the reaction UDP-N-acetyl-alpha-D-muramoyl-L-alanyl-gamma-D-glutamyl-meso-2,6-diaminopimeloyl-D-alanyl-D-alanine + di-trans,octa-cis-undecaprenyl phosphate = di-trans,octa-cis-undecaprenyl diphospho-N-acetyl-alpha-D-muramoyl-L-alanyl-D-glutamyl-meso-2,6-diaminopimeloyl-D-alanyl-D-alanine + UMP. It functions in the pathway cell wall biogenesis; peptidoglycan biosynthesis. Catalyzes the initial step of the lipid cycle reactions in the biosynthesis of the cell wall peptidoglycan: transfers peptidoglycan precursor phospho-MurNAc-pentapeptide from UDP-MurNAc-pentapeptide onto the lipid carrier undecaprenyl phosphate, yielding undecaprenyl-pyrophosphoryl-MurNAc-pentapeptide, known as lipid I. This chain is Phospho-N-acetylmuramoyl-pentapeptide-transferase, found in Geobacter sp. (strain M21).